A 396-amino-acid chain; its full sequence is Elongation factor Tu (396 aa).

In terms of domain architecture, tr-type G spans 10 to 206 (KPHVNVGTIG…ALDSYIPEPV (197 aa)). Positions 19-26 (GHIDHGKT) are G1. GTP is bound at residue 19–26 (GHIDHGKT). T26 contributes to the Mg(2+) binding site. Residues 60–64 (TKTVT) form a G2 region. The segment at 83–86 (DCPG) is G3. GTP-binding positions include 83 to 87 (DCPGH) and 138 to 141 (NKCD). The interval 138 to 141 (NKCD) is G4. The interval 176–178 (ASL) is G5.

The protein belongs to the TRAFAC class translation factor GTPase superfamily. Classic translation factor GTPase family. EF-Tu/EF-1A subfamily. Monomer.

It localises to the cytoplasm. The catalysed reaction is GTP + H2O = GDP + phosphate + H(+). Its function is as follows. GTP hydrolase that promotes the GTP-dependent binding of aminoacyl-tRNA to the A-site of ribosomes during protein biosynthesis. This is Elongation factor Tu from Sorangium cellulosum (strain So ce56) (Polyangium cellulosum (strain So ce56)).